The following is a 416-amino-acid chain: UDP-N-acetylmuramoylalanine--D-glutamate ligase (416 aa).

108 to 114 contributes to the ATP binding site; it reads GTTGKTT.

Belongs to the MurCDEF family.

The protein resides in the cytoplasm. The enzyme catalyses UDP-N-acetyl-alpha-D-muramoyl-L-alanine + D-glutamate + ATP = UDP-N-acetyl-alpha-D-muramoyl-L-alanyl-D-glutamate + ADP + phosphate + H(+). Its pathway is cell wall biogenesis; peptidoglycan biosynthesis. Functionally, cell wall formation. Catalyzes the addition of glutamate to the nucleotide precursor UDP-N-acetylmuramoyl-L-alanine (UMA). The sequence is that of UDP-N-acetylmuramoylalanine--D-glutamate ligase from Chlamydia trachomatis serovar A (strain ATCC VR-571B / DSM 19440 / HAR-13).